The chain runs to 426 residues: Aspartate aminotransferase, mitochondrial (426 aa).

Residues 1–29 constitute a mitochondrion transit peptide; that stretch reads MIRSARLISNIKFGQKNIRQFSTNTNWWA. The substrate site is built by G60, W156, and N209. K273 bears the N6-(pyridoxal phosphate)lysine mark. R401 lines the substrate pocket.

Belongs to the class-I pyridoxal-phosphate-dependent aminotransferase family. Homodimer. The cofactor is pyridoxal 5'-phosphate.

Its subcellular location is the mitochondrion matrix. The protein localises to the cell membrane. The catalysed reaction is L-aspartate + 2-oxoglutarate = oxaloacetate + L-glutamate. It carries out the reaction L-kynurenine + 2-oxoglutarate = kynurenate + L-glutamate + H2O. In terms of biological role, plays a key role in amino acid metabolism. Important for metabolite exchange between mitochondria and cytosol. The chain is Aspartate aminotransferase, mitochondrial (aatA) from Dictyostelium discoideum (Social amoeba).